The chain runs to 391 residues: GTPase Obg (391 aa).

The region spanning 1–159 (MKFLDQAKIF…IWVWLRLKLI (159 aa)) is the Obg domain. The OBG-type G domain maps to 160–327 (ADAGLIGLPN…VLRVMATHVD (168 aa)). GTP is bound by residues 166–173 (GLPNAGKS), 191–195 (FTTLH), 212–215 (DIPG), 279–282 (SKID), and 308–310 (SAI). Positions 173 and 193 each coordinate Mg(2+). The disordered stretch occupies residues 352–391 (TGIDHGYNRPSAVVDWEDAPFDDDDDDDGDESGDKGQWTR). The span at 366–382 (DWEDAPFDDDDDDDGDE) shows a compositional bias: acidic residues.

Belongs to the TRAFAC class OBG-HflX-like GTPase superfamily. OBG GTPase family. As to quaternary structure, monomer. It depends on Mg(2+) as a cofactor.

It localises to the cytoplasm. An essential GTPase which binds GTP, GDP and possibly (p)ppGpp with moderate affinity, with high nucleotide exchange rates and a fairly low GTP hydrolysis rate. Plays a role in control of the cell cycle, stress response, ribosome biogenesis and in those bacteria that undergo differentiation, in morphogenesis control. This chain is GTPase Obg, found in Rhodospirillum rubrum (strain ATCC 11170 / ATH 1.1.1 / DSM 467 / LMG 4362 / NCIMB 8255 / S1).